Reading from the N-terminus, the 283-residue chain is MAIAKSVRARAVGLRSLRVLCAQRSVAREFSVLNRPQPNYPGHIPLTPIERGALAIGSAVGSLLNPRRGDLIATVGETTATPFFIYRLRDAMLADPTGRRILRDRPRITSQTLSLPYLRSLPKNTVGYTYATWLDREGVSPDTRSSVQYIDDEECAYVMQRYRECHDFYHAVTGLPIVVEGEIALKAFEFMNTLIPMTGLSVFAAIRLKPEEKQRFWSIHLPWAIRSGLASKELINVYWEEQLERDVNELREELNIEKPPDLRDIRKKVREQKKAAKEAVIKS.

A mitochondrion-targeting transit peptide spans 1 to 25 (MAIAKSVRARAVGLRSLRVLCAQRS). Zn(2+)-binding residues include His-166, Asp-167, His-170, and Glu-182.

The protein belongs to the COQ4 family. As to quaternary structure, component of a multi-subunit COQ enzyme complex, composed of at least COQ3, COQ4, COQ5, COQ6, COQ7 and COQ9. The cofactor is Zn(2+).

Its subcellular location is the mitochondrion inner membrane. It carries out the reaction a 4-hydroxy-3-methoxy-5-(all-trans-polyprenyl)benzoate + H(+) = a 2-methoxy-6-(all-trans-polyprenyl)phenol + CO2. The protein operates within cofactor biosynthesis; ubiquinone biosynthesis. Its function is as follows. Lyase that catalyzes the C1-decarboxylation of 4-hydroxy-3-methoxy-5-(all-trans-polyprenyl)benzoic acid into 2-methoxy-6-(all-trans-polyprenyl)phenol during ubiquinone biosynthesis. The polypeptide is Ubiquinone biosynthesis protein COQ4, mitochondrial (Coccidioides immitis (strain RS) (Valley fever fungus)).